The primary structure comprises 172 residues: Neuropeptide-like protein nlp-8 (172 aa).

The N-terminal stretch at 1-26 (MSQKLLPISPLQLLFLQCLLIGFTAA) is a signal peptide.

In terms of processing, may be processed by convertase egl-3.

The protein localises to the secreted. Its function is as follows. Neuropeptide-like protein. Plays a role in behaviors associated with a sleep-like state induced by stress (SIS), acting in concert with the FARP (FMRFamide related) peptides, flp-13 and flp-24. The sequence is that of Neuropeptide-like protein nlp-8 from Caenorhabditis elegans.